A 192-amino-acid polypeptide reads, in one-letter code: Fe/S biogenesis protein NfuA (192 aa).

Residues cysteine 149 and cysteine 152 each contribute to the [4Fe-4S] cluster site.

Belongs to the NfuA family. In terms of assembly, homodimer. [4Fe-4S] cluster is required as a cofactor.

Functionally, involved in iron-sulfur cluster biogenesis. Binds a 4Fe-4S cluster, can transfer this cluster to apoproteins, and thereby intervenes in the maturation of Fe/S proteins. Could also act as a scaffold/chaperone for damaged Fe/S proteins. This chain is Fe/S biogenesis protein NfuA, found in Shewanella frigidimarina (strain NCIMB 400).